A 290-amino-acid polypeptide reads, in one-letter code: Undecaprenyl-diphosphatase 2 (290 aa).

6 helical membrane passes run 104-124 (WMVI…KDLI), 128-148 (LRNL…FILA), 174-194 (CLAL…GLFL), 205-225 (SFLL…PDAF), 237-257 (QLFV…AWLL), and 268-288 (FALW…FGVL).

It belongs to the UppP family.

It is found in the cell membrane. It catalyses the reaction di-trans,octa-cis-undecaprenyl diphosphate + H2O = di-trans,octa-cis-undecaprenyl phosphate + phosphate + H(+). In terms of biological role, catalyzes the dephosphorylation of undecaprenyl diphosphate (UPP). Confers resistance to bacitracin. This Corynebacterium jeikeium (strain K411) protein is Undecaprenyl-diphosphatase 2.